We begin with the raw amino-acid sequence, 817 residues long: TPR repeat-containing protein C19B12.01 (817 aa).

Disordered stretches follow at residues 276–298 (DQKS…PNHP) and 386–413 (GKSP…DGEN). TPR repeat units lie at residues 459 to 492 (LQMW…DPYD), 521 to 554 (APAQ…NPLS), 555 to 588 (YPTW…NPED), and 625 to 658 (WRIW…KGKD).

The chain is TPR repeat-containing protein C19B12.01 from Schizosaccharomyces pombe (strain 972 / ATCC 24843) (Fission yeast).